The primary structure comprises 110 residues: Nucleotide-binding protein in fmt 3'region (110 aa).

An ATP-binding site is contributed by 8-15 (GLSGAGKT). 57 to 60 (DARA) contributes to the GTP binding site.

This sequence belongs to the RapZ-like family.

Displays ATPase and GTPase activities. The sequence is that of Nucleotide-binding protein in fmt 3'region from Thermus thermophilus.